The primary structure comprises 213 residues: Riboflavin synthase (213 aa).

2 Lumazine-binding repeats span residues 1-97 and 98-195; these read MFTG…IGGH and LMSG…VDTV. 2,4-dihydroxypteridine-binding positions include 4-6, 48-50, 62-67, 101-103, Lys-137, 146-148, and 160-165; these read GIV, CLT, DLMKET, GHI, SLT, and HLIPET.

Homotrimer. Unlike in B.subtilis, does not interact with 6,7-dimethyl-8-ribityllumazine synthase.

The catalysed reaction is 2 6,7-dimethyl-8-(1-D-ribityl)lumazine + H(+) = 5-amino-6-(D-ribitylamino)uracil + riboflavin. It functions in the pathway cofactor biosynthesis; riboflavin biosynthesis; riboflavin from 2-hydroxy-3-oxobutyl phosphate and 5-amino-6-(D-ribitylamino)uracil: step 2/2. Functionally, catalyzes the dismutation of two molecules of 6,7-dimethyl-8-ribityllumazine, resulting in the formation of riboflavin and 5-amino-6-(D-ribitylamino)uracil. In Escherichia coli (strain K12), this protein is Riboflavin synthase (ribC).